The chain runs to 120 residues: uncharacterized protein (120 aa).

The first 18 residues, 1–18 (MRSWIPLLVLFAVLAVFA), serve as a signal peptide directing secretion. The disordered stretch occupies residues 20–99 (AGKSSESDES…GDNRVKRDGL (80 aa)).

This is an uncharacterized protein from Caenorhabditis elegans.